Consider the following 203-residue polypeptide: ATP-dependent Clp protease proteolytic subunit 2 (203 aa).

Ser98 serves as the catalytic Nucleophile. His123 is an active-site residue.

This sequence belongs to the peptidase S14 family. In terms of assembly, fourteen ClpP subunits assemble into 2 heptameric rings which stack back to back to give a disk-like structure with a central cavity, resembling the structure of eukaryotic proteasomes.

Its subcellular location is the cytoplasm. The catalysed reaction is Hydrolysis of proteins to small peptides in the presence of ATP and magnesium. alpha-casein is the usual test substrate. In the absence of ATP, only oligopeptides shorter than five residues are hydrolyzed (such as succinyl-Leu-Tyr-|-NHMec, and Leu-Tyr-Leu-|-Tyr-Trp, in which cleavage of the -Tyr-|-Leu- and -Tyr-|-Trp bonds also occurs).. In terms of biological role, cleaves peptides in various proteins in a process that requires ATP hydrolysis. Has a chymotrypsin-like activity. Plays a major role in the degradation of misfolded proteins. This Chlamydia trachomatis serovar A (strain ATCC VR-571B / DSM 19440 / HAR-13) protein is ATP-dependent Clp protease proteolytic subunit 2.